A 652-amino-acid polypeptide reads, in one-letter code: ATP-binding cassette sub-family G member 5 (652 aa).

Positions 1 to 25 (MGELPFLSPEGARGPHINRGSLSSL) are disordered. Over 1 to 384 (MGELPFLSPE…RVTRNLMRNK (384 aa)) the chain is Cytoplasmic. The 256-residue stretch at 39–294 (LGVLHVSYSV…FNNCGYPCPE (256 aa)) folds into the ABC transporter domain. The S-palmitoyl cysteine moiety is linked to residue Cys-61. An ATP-binding site is contributed by 87–94 (GSSGSGKT). Residues 385–405 (QAVIMRLVQNLIMGLFLIFYL) traverse the membrane as a helical segment. The ABC transmembrane type-2 domain maps to 389–646 (MRLVQNLIMG…ILGIVIFKVR (258 aa)). The Extracellular segment spans residues 406–422 (LRVQNNTLKGAVQDRVG). N-linked (GlcNAc...) asparagine glycosylation occurs at Asn-410. A helical membrane pass occupies residues 423-443 (LLYQLVGATPYTGMLNAVNLF). Residues 444-468 (PMLRAVSDQESQDGLYHKWQMLLAY) are Cytoplasmic-facing. Residues 469 to 490 (VLHVLPFSVIATVIFSSVCYWT) form a helical membrane-spanning segment. Over 491 to 501 (LGLYPEVARFG) the chain is Extracellular. The helical transmembrane segment at 502–522 (YFSAALLAPHLIGEFLTLVLL) threads the bilayer. The Cytoplasmic segment spans residues 523–529 (GIVQNPN). A helical membrane pass occupies residues 530-550 (IVNSIVALLSISGLLIGSGFI). The Extracellular segment spans residues 551–624 (RNIQEMPIPL…PGATSRFTAN (74 aa)). Residues Asn-585 and Asn-592 are each glycosylated (N-linked (GlcNAc...) asparagine). A helical transmembrane segment spans residues 625–645 (FLILYGFIPALVILGIVIFKV). The Cytoplasmic segment spans residues 646–652 (RDYLISR).

This sequence belongs to the ABC transporter superfamily. ABCG family. Eye pigment precursor importer (TC 3.A.1.204) subfamily. Heterodimer with ABCG8. It depends on Mg(2+) as a cofactor. N-glycosylated. N-glycosylation is important for efficient export out of the endoplasmic reticulum. In terms of tissue distribution, detected in liver and jejunum. Detected on enterocyte villi (at protein level). Expressed in jejunum, ileum and, at lower level, in the liver.

The protein resides in the cell membrane. Its subcellular location is the apical cell membrane. It carries out the reaction cholesterol(in) + ATP + H2O = cholesterol(out) + ADP + phosphate + H(+). The catalysed reaction is sitosterol(in) + ATP + H2O = sitosterol(out) + ADP + phosphate + H(+). With respect to regulation, cholesterol transport is inhibited by vanadate and by beryllium fluoride. In terms of biological role, ABCG5 and ABCG8 form an obligate heterodimer that mediates Mg(2+)- and ATP-dependent sterol transport across the cell membrane. Plays an essential role in the selective transport of dietary plant sterols and cholesterol in and out of the enterocytes and in the selective sterol excretion by the liver into bile. Required for normal sterol homeostasis. The heterodimer with ABCG8 has ATPase activity. This is ATP-binding cassette sub-family G member 5 from Mus musculus (Mouse).